The following is a 121-amino-acid chain: Ribosome-binding factor A (121 aa).

This sequence belongs to the RbfA family. Monomer. Binds 30S ribosomal subunits, but not 50S ribosomal subunits or 70S ribosomes.

It is found in the cytoplasm. In terms of biological role, one of several proteins that assist in the late maturation steps of the functional core of the 30S ribosomal subunit. Associates with free 30S ribosomal subunits (but not with 30S subunits that are part of 70S ribosomes or polysomes). Required for efficient processing of 16S rRNA. May interact with the 5'-terminal helix region of 16S rRNA. The polypeptide is Ribosome-binding factor A (Heliobacterium modesticaldum (strain ATCC 51547 / Ice1)).